A 103-amino-acid chain; its full sequence is Pyrimidine/purine nucleoside phosphorylase (103 aa).

It belongs to the nucleoside phosphorylase PpnP family.

The catalysed reaction is a purine D-ribonucleoside + phosphate = a purine nucleobase + alpha-D-ribose 1-phosphate. The enzyme catalyses adenosine + phosphate = alpha-D-ribose 1-phosphate + adenine. It catalyses the reaction cytidine + phosphate = cytosine + alpha-D-ribose 1-phosphate. It carries out the reaction guanosine + phosphate = alpha-D-ribose 1-phosphate + guanine. The catalysed reaction is inosine + phosphate = alpha-D-ribose 1-phosphate + hypoxanthine. The enzyme catalyses thymidine + phosphate = 2-deoxy-alpha-D-ribose 1-phosphate + thymine. It catalyses the reaction uridine + phosphate = alpha-D-ribose 1-phosphate + uracil. It carries out the reaction xanthosine + phosphate = alpha-D-ribose 1-phosphate + xanthine. Functionally, catalyzes the phosphorolysis of diverse nucleosides, yielding D-ribose 1-phosphate and the respective free bases. Can use uridine, adenosine, guanosine, cytidine, thymidine, inosine and xanthosine as substrates. Also catalyzes the reverse reactions. The sequence is that of Pyrimidine/purine nucleoside phosphorylase from Laribacter hongkongensis (strain HLHK9).